The chain runs to 365 residues: Probable caffeine synthase 5 (365 aa).

Tyr18 is a binding site for S-adenosyl-L-homocysteine. A caffeine-binding site is contributed by Thr25. Cys61, Asn66, Asp98, Leu99, Ser134, and Phe135 together coordinate S-adenosyl-L-homocysteine. Tyr152, His155, and Trp156 together coordinate caffeine. Residues Asn173, Asp259, Phe261, and Asn262 each contribute to the Mg(2+) site. Position 317 (Phe317) interacts with caffeine.

Belongs to the methyltransferase superfamily. Type-7 methyltransferase family. The cofactor is Mg(2+).

It participates in alkaloid biosynthesis. Its function is as follows. May be involved in the biosynthesis of caffeine. This is Probable caffeine synthase 5 from Camellia sinensis (Tea plant).